The primary structure comprises 231 residues: 5'-methylthioadenosine/S-adenosylhomocysteine nucleosidase (231 aa).

The Proton acceptor role is filled by glutamate 13. Substrate-binding positions include glycine 79, methionine 153, and 174 to 175 (ME). Aspartate 198 (proton donor) is an active-site residue.

The protein belongs to the PNP/UDP phosphorylase family. MtnN subfamily.

It carries out the reaction S-adenosyl-L-homocysteine + H2O = S-(5-deoxy-D-ribos-5-yl)-L-homocysteine + adenine. The enzyme catalyses S-methyl-5'-thioadenosine + H2O = 5-(methylsulfanyl)-D-ribose + adenine. It catalyses the reaction 5'-deoxyadenosine + H2O = 5-deoxy-D-ribose + adenine. Its pathway is amino-acid biosynthesis; L-methionine biosynthesis via salvage pathway; S-methyl-5-thio-alpha-D-ribose 1-phosphate from S-methyl-5'-thioadenosine (hydrolase route): step 1/2. Its function is as follows. Catalyzes the irreversible cleavage of the glycosidic bond in both 5'-methylthioadenosine (MTA) and S-adenosylhomocysteine (SAH/AdoHcy) to adenine and the corresponding thioribose, 5'-methylthioribose and S-ribosylhomocysteine, respectively. Also cleaves 5'-deoxyadenosine, a toxic by-product of radical S-adenosylmethionine (SAM) enzymes, into 5-deoxyribose and adenine. This Halalkalibacterium halodurans (strain ATCC BAA-125 / DSM 18197 / FERM 7344 / JCM 9153 / C-125) (Bacillus halodurans) protein is 5'-methylthioadenosine/S-adenosylhomocysteine nucleosidase.